The primary structure comprises 346 residues: Hexosaminidase D (346 aa).

Glutamate 141 (proton donor) is an active-site residue.

This sequence belongs to the glycosyl hydrolase 20 family. Homodimer; disulfide-linked.

The protein localises to the cytoplasm. Its subcellular location is the nucleus. The protein resides in the extracellular vesicle. It carries out the reaction Hydrolysis of terminal non-reducing N-acetyl-D-hexosamine residues in N-acetyl-beta-D-hexosaminides.. Inhibited by O-(2-acetamido-2-deoxy-D-glucopyranosylidene)amino N-phenylcarbamate (PUGNAc). Inhibited by galacto-NAG-thiazoline. Has hexosaminidase activity. Responsible for the cleavage of the monosaccharides N-acetylglucosamine (GlcNAc) and N-acetylgalactosamine (GalNAc) from cellular substrates. Has a preference for galactosaminide over glucosaminide substrates. The protein is Hexosaminidase D of Bos taurus (Bovine).